We begin with the raw amino-acid sequence, 239 residues long: Sugar fermentation stimulation protein homolog (239 aa).

The protein belongs to the SfsA family.

In Cyanothece sp. (strain PCC 7425 / ATCC 29141), this protein is Sugar fermentation stimulation protein homolog.